A 328-amino-acid chain; its full sequence is Tetraacyldisaccharide 4'-kinase (328 aa).

55–62 (TAGGNGKT) is an ATP binding site.

The protein belongs to the LpxK family.

The catalysed reaction is a lipid A disaccharide + ATP = a lipid IVA + ADP + H(+). Its pathway is glycolipid biosynthesis; lipid IV(A) biosynthesis; lipid IV(A) from (3R)-3-hydroxytetradecanoyl-[acyl-carrier-protein] and UDP-N-acetyl-alpha-D-glucosamine: step 6/6. In terms of biological role, transfers the gamma-phosphate of ATP to the 4'-position of a tetraacyldisaccharide 1-phosphate intermediate (termed DS-1-P) to form tetraacyldisaccharide 1,4'-bis-phosphate (lipid IVA). This is Tetraacyldisaccharide 4'-kinase from Escherichia coli (strain SMS-3-5 / SECEC).